Reading from the N-terminus, the 61-residue chain is Adipokinetic prohormone type 2 (61 aa).

Positions 1–22 are cleaved as a signal peptide; it reads MRQGCALTLMLLVVVCAALSAA. Residue Gln23 is modified to Pyrrolidone carboxylic acid. At Trp30 the chain carries Tryptophan amide.

This sequence belongs to the AKH/HRTH/RPCH family. Adipokinetic hormone precursor-related peptide (APRP) can form three type of disulfide-bond dimers: p1 (alpha-alpha), p2 (alpha-beta), and p3 (beta-beta).

Its subcellular location is the secreted. In terms of biological role, this hormone, released from cells in the corpora cardiaca, causes release of diglycerides from the fat body and stimulation of muscles to use these diglycerides as an energy source during energy-demanding processes. In Schistocerca nitens (Vagrant locust), this protein is Adipokinetic prohormone type 2.